We begin with the raw amino-acid sequence, 213 residues long: Small ribosomal subunit protein uS3c (213 aa).

The KH type-2 domain maps to 39–109 (IRKYLNAKLA…KFRITITYLQ (71 aa)).

Belongs to the universal ribosomal protein uS3 family. As to quaternary structure, part of the 30S ribosomal subunit.

It localises to the plastid. It is found in the chloroplast. This Mesostigma viride (Green alga) protein is Small ribosomal subunit protein uS3c (rps3).